The following is a 447-amino-acid chain: NAD-dependent histone deacetylase HST3 (447 aa).

The segment at 1-21 is disordered; sequence MTSVSPSPPASRSGSMCSDLP. Positions 35–363 constitute a Deacetylase sirtuin-type domain; the sequence is LDADDEVLRR…IKKLRQLKRE (329 aa). Residues 60–79 and 151–154 each bind NAD(+); these read GAGISCNAGIPDFRSSDGLY and QNID. The active-site Proton acceptor is the His-187. Residues Cys-195, Cys-198, Cys-220, and Cys-223 each contribute to the Zn(2+) site. Residues 282-284, 312-314, and Cys-333 each bind NAD(+); these read GTS and NKT. The span at 365–375 shows a compositional bias: basic and acidic residues; that stretch reads SDLRKQMKAQK. Disordered regions lie at residues 365–393 and 411–447; these read SDLRKQMKAQKDSIGTPPTTPLRTAQGID and KRKILSPENSSEEDEEENLDTRKRAKIRPTFGDNQAS.

It belongs to the sirtuin family. Class I subfamily. Zn(2+) is required as a cofactor.

It localises to the cytoplasm. The protein localises to the nucleus. The catalysed reaction is N(6)-acetyl-L-lysyl-[protein] + NAD(+) + H2O = 2''-O-acetyl-ADP-D-ribose + nicotinamide + L-lysyl-[protein]. NAD-dependent histone deacetylase, which contributes together with HST4 to histone H3 'Lys-56' deacetylation, regulation of telomeric silencing, proper cell cycle progression, DNA damage control, DNA recombination, and genomic maintenance. In Saccharomyces cerevisiae (strain ATCC 204508 / S288c) (Baker's yeast), this protein is NAD-dependent histone deacetylase HST3 (HST3).